Here is a 359-residue protein sequence, read N- to C-terminus: tRNA-specific 2-thiouridylase MnmA (359 aa).

Residues Gly11–Ser18 and Ile37 each bind ATP. Catalysis depends on Cys99, which acts as the Nucleophile. A disulfide bridge connects residues Cys99 and Cys195. Gly123 lines the ATP pocket. The segment at Lys145 to Gln147 is interaction with tRNA. Cys195 acts as the Cysteine persulfide intermediate in catalysis. The interaction with tRNA stretch occupies residues Arg304–Tyr305.

This sequence belongs to the MnmA/TRMU family.

The protein localises to the cytoplasm. The catalysed reaction is S-sulfanyl-L-cysteinyl-[protein] + uridine(34) in tRNA + AH2 + ATP = 2-thiouridine(34) in tRNA + L-cysteinyl-[protein] + A + AMP + diphosphate + H(+). Catalyzes the 2-thiolation of uridine at the wobble position (U34) of tRNA, leading to the formation of s(2)U34. The protein is tRNA-specific 2-thiouridylase MnmA of Chlorobium phaeobacteroides (strain BS1).